Here is a 143-residue protein sequence, read N- to C-terminus: 6,7-dimethyl-8-ribityllumazine synthase (143 aa).

Residues F13, 45-47, and 69-71 each bind 5-amino-6-(D-ribitylamino)uracil; these read TFD and CVI. 74–75 is a binding site for (2S)-2-hydroxy-3-oxobutyl phosphate; that stretch reads ET. The active-site Proton donor is H77. Residue L102 participates in 5-amino-6-(D-ribitylamino)uracil binding. R117 contacts (2S)-2-hydroxy-3-oxobutyl phosphate.

The protein belongs to the DMRL synthase family.

The enzyme catalyses (2S)-2-hydroxy-3-oxobutyl phosphate + 5-amino-6-(D-ribitylamino)uracil = 6,7-dimethyl-8-(1-D-ribityl)lumazine + phosphate + 2 H2O + H(+). The protein operates within cofactor biosynthesis; riboflavin biosynthesis; riboflavin from 2-hydroxy-3-oxobutyl phosphate and 5-amino-6-(D-ribitylamino)uracil: step 1/2. Catalyzes the formation of 6,7-dimethyl-8-ribityllumazine by condensation of 5-amino-6-(D-ribitylamino)uracil with 3,4-dihydroxy-2-butanone 4-phosphate. This is the penultimate step in the biosynthesis of riboflavin. This chain is 6,7-dimethyl-8-ribityllumazine synthase, found in Archaeoglobus fulgidus (strain ATCC 49558 / DSM 4304 / JCM 9628 / NBRC 100126 / VC-16).